Consider the following 1070-residue polypeptide: Isoleucine--tRNA ligase (1070 aa).

The 'HIGH' region signature appears at 50-60 (PYTSGAAHMGT). The 'KMSKS' region signature appears at 606–610 (GMSKS). Lys-609 provides a ligand contact to ATP.

The protein belongs to the class-I aminoacyl-tRNA synthetase family. IleS type 2 subfamily. Monomer. It depends on Zn(2+) as a cofactor.

Its subcellular location is the cytoplasm. It catalyses the reaction tRNA(Ile) + L-isoleucine + ATP = L-isoleucyl-tRNA(Ile) + AMP + diphosphate. In terms of biological role, catalyzes the attachment of isoleucine to tRNA(Ile). As IleRS can inadvertently accommodate and process structurally similar amino acids such as valine, to avoid such errors it has two additional distinct tRNA(Ile)-dependent editing activities. One activity is designated as 'pretransfer' editing and involves the hydrolysis of activated Val-AMP. The other activity is designated 'posttransfer' editing and involves deacylation of mischarged Val-tRNA(Ile). The polypeptide is Isoleucine--tRNA ligase (Halobacterium salinarum (strain ATCC 700922 / JCM 11081 / NRC-1) (Halobacterium halobium)).